The primary structure comprises 354 residues: Uroporphyrinogen decarboxylase (354 aa).

Residues 27 to 31 (RQAGR), D77, Y154, T209, and H327 each bind substrate.

This sequence belongs to the uroporphyrinogen decarboxylase family. In terms of assembly, homodimer.

It localises to the cytoplasm. The catalysed reaction is uroporphyrinogen III + 4 H(+) = coproporphyrinogen III + 4 CO2. It participates in porphyrin-containing compound metabolism; protoporphyrin-IX biosynthesis; coproporphyrinogen-III from 5-aminolevulinate: step 4/4. In terms of biological role, catalyzes the decarboxylation of four acetate groups of uroporphyrinogen-III to yield coproporphyrinogen-III. The polypeptide is Uroporphyrinogen decarboxylase (Pseudomonas putida (strain ATCC 700007 / DSM 6899 / JCM 31910 / BCRC 17059 / LMG 24140 / F1)).